The sequence spans 945 residues: Netrin receptor UNC5B (945 aa).

The signal sequence occupies residues 1 to 26 (MRARSGVRSALLLALLLCWDPTPSLA). Residues 27–377 (GVDSAGQVLP…LETSGDVALY (351 aa)) lie on the Extracellular side of the membrane. An Ig-like domain is found at 48 to 145 (PYFLLEPQDA…SGTTKSRRAY (98 aa)). Cystine bridges form between cysteine 69-cysteine 130, cysteine 81-cysteine 128, cysteine 174-cysteine 225, cysteine 258-cysteine 295, cysteine 262-cysteine 299, cysteine 273-cysteine 285, cysteine 314-cysteine 348, cysteine 318-cysteine 353, and cysteine 326-cysteine 338. Positions 153 to 242 (KNFDQEPLAK…KRRSTTATVI (90 aa)) constitute an Ig-like C2-type domain. Asparagine 222 is a glycosylation site (N-linked (GlcNAc...) asparagine). 2 TSP type-1 domains span residues 246–300 (NGGW…TVCP) and 302–354 (DGAW…GLCV). N-linked (GlcNAc...) asparagine glycosylation occurs at asparagine 347. Residues 378–398 (AGLVVAVFVVVAVLMAVGVIV) traverse the membrane as a helical segment. Topologically, residues 399–945 (YRRNCRDFDT…LVAMATDGDC (547 aa)) are cytoplasmic. The S-palmitoyl cysteine moiety is linked to residue cysteine 403. Residues 543 to 686 (SSVSGTFGCL…LGTYVFMGES (144 aa)) form the ZU5 domain. Position 581 is a phosphotyrosine (tyrosine 581). Positions 689–838 (RSAVKRLQLA…AETPAGSLDA (150 aa)) are UPA domain. The segment at 707–725 (SLEYSLRVYCLEDTPVALK) is interaction with DCC. Positions 865-943 (KICSSLDAPN…EMLVAMATDG (79 aa)) constitute a Death domain.

The protein belongs to the unc-5 family. In terms of assembly, interacts with the cytoplasmic part of DCC. Interacts with GNAI2 via its cytoplasmic part. Interacts (via death domain) with DAPK1 (via death domain). Interacts (via extracellular domain) with FLRT2 and FLRT3 (via extracellular domain), but has higher affinity for FLRT3. Identified in a complex with FLRT3 and ADGRL3; does not interact with ADGRL3 by itself. Phosphorylated on cytoplasmic tyrosine residues. In terms of processing, palmitoylation is required for pro-apoptotic activity, but not for location at lipid rafts. Post-translationally, proteolytically cleaved by caspases during apoptosis. The cleavage does not take place when the receptor is associated with netrin ligand. Its cleavage by caspases is required to induce apoptosis. Highly expressed in brain. Expressed in lung during late development. Expressed during early blood vessel formation, in the semicircular canal and in a dorsal to ventral gradient in the retina.

It localises to the cell membrane. It is found in the membrane raft. Receptor for netrin required for axon guidance. Mediates axon repulsion of neuronal growth cones in the developing nervous system upon ligand binding. Axon repulsion in growth cones may be caused by its association with DCC that may trigger signaling for repulsion. Functions as a netrin receptor that negatively regulates vascular branching during angiogenesis. Mediates retraction of tip cell filopodia on endothelial growth cones in response to netrin. It also acts as a dependence receptor required for apoptosis induction when not associated with netrin ligand. Mediates apoptosis by activating DAPK1. In the absence of NTN1, activates DAPK1 by reducing its autoinhibitory phosphorylation at Ser-308 thereby increasing its catalytic activity. The protein is Netrin receptor UNC5B (Unc5b) of Mus musculus (Mouse).